The primary structure comprises 264 residues: H-2 class II histocompatibility antigen, I-E beta chain (264 aa).

The signal sequence occupies residues 1 to 31 (MVWLPRVPCVAAVILLLTVLSPPVALVRNSR). The beta-1 stretch occupies residues 32–121 (PRFLEYSTSE…IFDNFLVPRR (90 aa)). Residues 32-225 (PRFLEYSTSE…KAQSTSAQNK (194 aa)) lie on the Extracellular side of the membrane. Intrachain disulfides connect Cys-42-Cys-106 and Cys-144-Cys-200. Residue Asn-46 is glycosylated (N-linked (GlcNAc...) asparagine). Residues 122–215 (VEPTVTVYPT…SLTDPVTVEW (94 aa)) form a beta-2 region. Residues 124 to 214 (PTVTVYPTKT…PSLTDPVTVE (91 aa)) enclose the Ig-like C1-type domain. The segment at 216-225 (KAQSTSAQNK) is connecting peptide. A helical membrane pass occupies residues 226–248 (MLSGVGGFVLGLLFLGAGLFIYF). The Cytoplasmic portion of the chain corresponds to 249 to 264 (RNQKGQSGLQPTGLLS).

This sequence belongs to the MHC class II family. In terms of processing, ubiquitinated in immature dendritic cells leading to down-regulation of MHC class II.

The protein resides in the membrane. The sequence is that of H-2 class II histocompatibility antigen, I-E beta chain (H2-Eb1) from Mus musculus (Mouse).